We begin with the raw amino-acid sequence, 612 residues long: Dihydroxy-acid dehydratase (612 aa).

Position 81 (Asp-81) interacts with Mg(2+). Cys-122 serves as a coordination point for [2Fe-2S] cluster. Residues Asp-123 and Lys-124 each coordinate Mg(2+). N6-carboxylysine is present on Lys-124. Residue Cys-193 coordinates [2Fe-2S] cluster. Residue Glu-489 coordinates Mg(2+). The active-site Proton acceptor is the Ser-515.

This sequence belongs to the IlvD/Edd family. As to quaternary structure, homodimer. [2Fe-2S] cluster serves as cofactor. It depends on Mg(2+) as a cofactor.

It carries out the reaction (2R)-2,3-dihydroxy-3-methylbutanoate = 3-methyl-2-oxobutanoate + H2O. It catalyses the reaction (2R,3R)-2,3-dihydroxy-3-methylpentanoate = (S)-3-methyl-2-oxopentanoate + H2O. Its pathway is amino-acid biosynthesis; L-isoleucine biosynthesis; L-isoleucine from 2-oxobutanoate: step 3/4. It participates in amino-acid biosynthesis; L-valine biosynthesis; L-valine from pyruvate: step 3/4. Functions in the biosynthesis of branched-chain amino acids. Catalyzes the dehydration of (2R,3R)-2,3-dihydroxy-3-methylpentanoate (2,3-dihydroxy-3-methylvalerate) into 2-oxo-3-methylpentanoate (2-oxo-3-methylvalerate) and of (2R)-2,3-dihydroxy-3-methylbutanoate (2,3-dihydroxyisovalerate) into 2-oxo-3-methylbutanoate (2-oxoisovalerate), the penultimate precursor to L-isoleucine and L-valine, respectively. In Teredinibacter turnerae (strain ATCC 39867 / T7901), this protein is Dihydroxy-acid dehydratase.